Here is a 619-residue protein sequence, read N- to C-terminus: Manganese lipoxygenase (619 aa).

The signal sequence occupies residues 1 to 16; it reads MRVLVWIAGLAPLAVA. N-linked (GlcNAc...) asparagine glycosylation is found at N32, N42, N62, N86, N164, and N229. Residues 55–619 form the Lipoxygenase domain; that stretch reads TLPCEDGNST…PGNIPFYLSV (565 aa). Mn(2+) contacts are provided by H298, H303, H483, and N487. N515 and N549 each carry an N-linked (GlcNAc...) asparagine glycan. Position 619 (V619) interacts with Mn(2+).

Belongs to the lipoxygenase family. Manganese lipoxygenase subfamily. It depends on Mn(2+) as a cofactor.

Its subcellular location is the secreted. The catalysed reaction is (9Z,12Z)-octadecadienoate + O2 = (9S)-hydroperoxy-(10E,12Z)-octadecadienoate. It catalyses the reaction (9Z,12Z)-octadecadienoate + O2 = (11S)-hydroperoxy-(9Z,12Z)-octadecadienoate. The enzyme catalyses (9Z,12Z)-octadecadienoate + O2 = (13R)-hydroperoxy-(9Z,11E)-octadecadienoate. It carries out the reaction (9Z,12Z,15Z)-octadecatrienoate + O2 = (9S)-hydroperoxy-(10E,12Z,15Z)-octadecatrienoate. The catalysed reaction is (9Z,12Z,15Z)-octadecatrienoate + O2 = (11R)-hydroperoxy-(9Z,12Z,15Z)-octadecatrienoate. It catalyses the reaction (9Z,12Z,15Z)-octadecatrienoate + O2 = (13R)-hydroperoxy-(9Z,11E,15Z)-octadecatrienoate. The enzyme catalyses (9S)-hydroperoxy-(10E,12Z,15Z)-octadecatrienoate + O2 = (9S,16S)-dihydroperoxy-(10E,12Z,14E)-octadecatrienoate. In terms of biological role, lipoxygenase that metabolizes linoleic and alpha-linolenic acids to 9S-, 11- and 13R-hydroperoxy fatty acids. At the end of lipoxygenation, the intermediate product 11S-HPODE from linoleic acid is then transformed into 9S-HPODE and 13R-HPODE as the final products. The intermediate product 11R-HPOTrE from alpha-linolenic acid is transformed into 9S-HPOTrE and 13R-HPOTrE as the final products. 9S-HPOTrE is further oxidized by the enzyme to 9S,16S-DiHPOTrE as the end product. The protein is Manganese lipoxygenase of Pyricularia oryzae (strain 70-15 / ATCC MYA-4617 / FGSC 8958) (Rice blast fungus).